A 399-amino-acid chain; its full sequence is S-adenosylmethionine synthase (399 aa).

Residue H17 coordinates ATP. D19 provides a ligand contact to Mg(2+). E45 is a K(+) binding site. Residues E58 and Q101 each coordinate L-methionine. The tract at residues 101 to 111 is flexible loop; that stretch reads QSADIAMGVDQ. ATP is bound by residues 177-179, 244-245, D253, 259-260, A276, and K280; these read DGK, RF, and RK. Residue D253 coordinates L-methionine. K284 lines the L-methionine pocket.

The protein belongs to the AdoMet synthase family. As to quaternary structure, homotetramer; dimer of dimers. The cofactor is Mg(2+). It depends on K(+) as a cofactor.

It is found in the cytoplasm. The enzyme catalyses L-methionine + ATP + H2O = S-adenosyl-L-methionine + phosphate + diphosphate. It functions in the pathway amino-acid biosynthesis; S-adenosyl-L-methionine biosynthesis; S-adenosyl-L-methionine from L-methionine: step 1/1. Catalyzes the formation of S-adenosylmethionine (AdoMet) from methionine and ATP. The overall synthetic reaction is composed of two sequential steps, AdoMet formation and the subsequent tripolyphosphate hydrolysis which occurs prior to release of AdoMet from the enzyme. In Bacillus cereus (strain G9842), this protein is S-adenosylmethionine synthase.